The sequence spans 167 residues: Putative N-acetylgalactosamine-6-phosphate deacetylase (167 aa).

The protein belongs to the metallo-dependent hydrolases superfamily. NagA family.

The enzyme catalyses N-acetyl-D-galactosamine 6-phosphate + H2O = D-galactosamine 6-phosphate + acetate. This chain is Putative N-acetylgalactosamine-6-phosphate deacetylase (agaA), found in Escherichia coli (strain K12).